The primary structure comprises 255 residues: MWIGIISLFPEMFRAITDYGVTGRAVKNGLLSIQSWSPRDFTHDRHRTVDDRPYGGGPGMLMMVQPLRDAIHAAKAAAGEGAKVIYLSPQGRKLDQAGVSELATNQKLILVCGRYEGIDERVIQTEIDEEWSIGDYVLSGGELPAMTLIDSVSRFIPGVLGHEASATEDSFAEGLLDCPHYTRPEVLEGMEVPPVLLSGNHAEIRRWRLKQSLGRTWLRRPKLLENLALTEEQARLLAEFKTEHAQQQHKHDGMA.

Residues G113 and 133-138 contribute to the S-adenosyl-L-methionine site; that span reads IGDYVL.

The protein belongs to the RNA methyltransferase TrmD family. As to quaternary structure, homodimer.

The protein resides in the cytoplasm. The catalysed reaction is guanosine(37) in tRNA + S-adenosyl-L-methionine = N(1)-methylguanosine(37) in tRNA + S-adenosyl-L-homocysteine + H(+). Specifically methylates guanosine-37 in various tRNAs. The polypeptide is tRNA (guanine-N(1)-)-methyltransferase (Shigella flexneri serotype 5b (strain 8401)).